A 215-amino-acid polypeptide reads, in one-letter code: UPF0323 lipoprotein jhp_0217 (215 aa).

The first 27 residues, 1–27, serve as a signal peptide directing secretion; it reads MKKPYRKISDYAIVGGLSALVMVSIVG. A lipid anchor (N-palmitoyl cysteine) is attached at C28. A lipid anchor (S-diacylglycerol cysteine) is attached at C28. Over residues 158 to 169 the composition is skewed to polar residues; sequence QRTYKSPQAYQR. Residues 158–215 are disordered; it reads QRTYKSPQAYQRSQNSFSKSAPSASSMGTASKGQSGFFGSSRPTSSPAISSGTRGFNA. A compositionally biased stretch (low complexity) spans 170–183; that stretch reads SQNSFSKSAPSASS. A compositionally biased stretch (polar residues) spans 184-195; sequence MGTASKGQSGFF. Positions 197–208 are enriched in low complexity; the sequence is SSRPTSSPAISS.

The protein belongs to the UPF0323 family.

Its subcellular location is the cell membrane. This is UPF0323 lipoprotein jhp_0217 from Helicobacter pylori (strain J99 / ATCC 700824) (Campylobacter pylori J99).